Consider the following 231-residue polypeptide: Probable tetraspanin tspE (231 aa).

The Cytoplasmic portion of the chain corresponds to Met1 to Phe21. A helical transmembrane segment spans residues Ile22 to Ile42. Topologically, residues Ile43–Pro58 are extracellular. A helical membrane pass occupies residues Leu59 to Ile79. Over Trp80 to Lys83 the chain is Cytoplasmic. Residues Leu84–Val104 traverse the membrane as a helical segment. Residues Ser105–Tyr195 are Extracellular-facing. The helical transmembrane segment at Tyr196–Leu216 threads the bilayer. The Cytoplasmic portion of the chain corresponds to Lys217–Asp231.

It belongs to the tetraspanin (TM4SF) family.

Its subcellular location is the membrane. In Dictyostelium discoideum (Social amoeba), this protein is Probable tetraspanin tspE (tspE).